The sequence spans 446 residues: Adenylosuccinate synthetase (446 aa).

Residues 12 to 18 (GDEGKGK) and 40 to 42 (GHT) each bind GTP. The active-site Proton acceptor is the Asp-13. Mg(2+) contacts are provided by Asp-13 and Gly-40. Residues 13–16 (DEGK), 38–41 (NAGH), Thr-128, Arg-142, Gln-223, Thr-238, and Arg-302 each bind IMP. Catalysis depends on His-41, which acts as the Proton donor. 298 to 304 (TTTGRRR) serves as a coordination point for substrate. GTP-binding positions include Arg-304, 330–332 (KLD), and 412–414 (SLG).

Belongs to the adenylosuccinate synthetase family. Homodimer. The cofactor is Mg(2+).

It is found in the cytoplasm. It carries out the reaction IMP + L-aspartate + GTP = N(6)-(1,2-dicarboxyethyl)-AMP + GDP + phosphate + 2 H(+). Its pathway is purine metabolism; AMP biosynthesis via de novo pathway; AMP from IMP: step 1/2. Its function is as follows. Plays an important role in the de novo pathway of purine nucleotide biosynthesis. Catalyzes the first committed step in the biosynthesis of AMP from IMP. The protein is Adenylosuccinate synthetase of Crocosphaera subtropica (strain ATCC 51142 / BH68) (Cyanothece sp. (strain ATCC 51142)).